The chain runs to 530 residues: MKLNDVTRGTGLEEHGIINANLIYWTPPTAVLYEQIVERGEGLVSHLGALAVKTGHYTGRAANEKFIVDEPTSRDHINWGKVNRPFDPEKFDSLYKRMTAYMHGKDLFIQDCFAGASPKHRLPIRVIAEKAWHSLFARNMFVKATAAELENHKPRFTVIDMPNFHAVPQIDGTNSETFIIINFAKRLVIIGGTSYAGEIKKSIFTVLNYLLPHHSKVMSMHCSANTGEKGDVAVFFGLSGTGKTTLSAAPNRSLIGDDEHGWDDDGVFNFEGGCYAKIINLSKESEPEIYETTRKFGTILENVAIDTISRRIDLNDDSFTENTRASYPITHIPNIVPSGMGGHPTNVIMLTCDAFGVLPPIARLTPEQAMYHFLSGYTAKVAGTEAGITEPQATFSTCFGAPFMALHPSVYAELLKAKIARHKVNCWLVNTGWSGGAYGVGSRMKIGYSRALVNAALDGTLAAGQFEKDSVFGLDIPRACPGVPGEVLNPRNVWADKAAYDATAKDLVEMFRKNFEQFKANVSQEVACVL.

The substrate site is built by R60, Y195, and K201. ATP is bound by residues K201, H221, and 237–245 (GLSGTGKTT). K201 and H221 together coordinate Mn(2+). D258 is a Mn(2+) binding site. ATP-binding residues include E286, R324, and S449. R324 contributes to the substrate binding site.

It belongs to the phosphoenolpyruvate carboxykinase (ATP) family. Requires Mn(2+) as cofactor.

Its subcellular location is the cytoplasm. It carries out the reaction oxaloacetate + ATP = phosphoenolpyruvate + ADP + CO2. It functions in the pathway carbohydrate biosynthesis; gluconeogenesis. Functionally, involved in the gluconeogenesis. Catalyzes the conversion of oxaloacetate (OAA) to phosphoenolpyruvate (PEP) through direct phosphoryl transfer between the nucleoside triphosphate and OAA. The sequence is that of Phosphoenolpyruvate carboxykinase (ATP) from Geotalea uraniireducens (strain Rf4) (Geobacter uraniireducens).